A 298-amino-acid chain; its full sequence is MQLLKASDIISHLQIDGIFPGGNAIPCTHLNNYMNIKEKQLMNTIADVQSSRDLRNLPINQVGIKDLRFPITLQTAEGIQSTIARLTMTVYLPAEQKGTHMSRFVALMEQHAEALDFAQLRKLTTEMVALLDSRAGKISVSFPFFRKKTAPVSGIRSLLDYDVCLTGEIKDGAYGHSMKVMIPVTSLCPCSKEISQYGAHNQRSHVTVSLTADAEVGIEEVIDYVEAQASCQLYGLLKRPDEKYVTEKAYENPKFVEDMVRDVATSLIADKRIKSFVVESENFESIHNHSAYAYIAYP.

Belongs to the GTP cyclohydrolase IV family.

It catalyses the reaction GTP + H2O = 7,8-dihydroneopterin 3'-triphosphate + formate + H(+). The protein operates within cofactor biosynthesis; 7,8-dihydroneopterin triphosphate biosynthesis; 7,8-dihydroneopterin triphosphate from GTP: step 1/1. In terms of biological role, converts GTP to 7,8-dihydroneopterin triphosphate. The sequence is that of GTP cyclohydrolase FolE2 from Neisseria meningitidis serogroup B (strain ATCC BAA-335 / MC58).